Reading from the N-terminus, the 77-residue chain is Small ribosomal subunit protein bS20 (77 aa).

Belongs to the bacterial ribosomal protein bS20 family.

Binds directly to 16S ribosomal RNA. This chain is Small ribosomal subunit protein bS20, found in Streptococcus agalactiae serotype Ia (strain ATCC 27591 / A909 / CDC SS700).